Reading from the N-terminus, the 427-residue chain is 3-phosphoshikimate 1-carboxyvinyltransferase (427 aa).

Residues Lys22, Ser23, and Arg27 each contribute to the 3-phosphoshikimate site. Lys22 is a phosphoenolpyruvate binding site. 2 residues coordinate phosphoenolpyruvate: Gly96 and Arg124. 3-phosphoshikimate-binding residues include Ser169, Ser170, Gln171, Ser197, Asp313, Asn336, and Lys340. Gln171 is a phosphoenolpyruvate binding site. Residue Asp313 is the Proton acceptor of the active site. The phosphoenolpyruvate site is built by Arg344, Arg386, and Lys411.

The protein belongs to the EPSP synthase family. In terms of assembly, monomer.

The protein resides in the cytoplasm. It carries out the reaction 3-phosphoshikimate + phosphoenolpyruvate = 5-O-(1-carboxyvinyl)-3-phosphoshikimate + phosphate. The protein operates within metabolic intermediate biosynthesis; chorismate biosynthesis; chorismate from D-erythrose 4-phosphate and phosphoenolpyruvate: step 6/7. Catalyzes the transfer of the enolpyruvyl moiety of phosphoenolpyruvate (PEP) to the 5-hydroxyl of shikimate-3-phosphate (S3P) to produce enolpyruvyl shikimate-3-phosphate and inorganic phosphate. The protein is 3-phosphoshikimate 1-carboxyvinyltransferase of Escherichia coli O17:K52:H18 (strain UMN026 / ExPEC).